A 484-amino-acid chain; its full sequence is Auxin transporter-like protein 2 (484 aa).

Over 1–59 (MLPQKQGEEAIVSSFNETDQQEGVVGREEEVEDHSFSVKNFLWHGGSVWDAWFSCASNQ) the chain is Cytoplasmic. A helical membrane pass occupies residues 60-77 (VAQVLLTLPYSFSQLGML). Topologically, residues 78–79 (SG) are extracellular. The helical transmembrane segment at 80-100 (ILLQVFYGILGSWTAYLISVL) threads the bilayer. The Cytoplasmic segment spans residues 101–135 (YVEYRSRKEKENVNFKNHVIQWFEVLDGLLGPYWK). Residues 136–156 (ALGLAFNCTFLLFGSVIQLIA) traverse the membrane as a helical segment. Residues 157 to 172 (CASNIYYINDNLDKRT) lie on the Extracellular side of the membrane. Residues 173–193 (WTYIFGACCATTVFIPSFHNY) traverse the membrane as a helical segment. The Cytoplasmic segment spans residues 194–196 (RIW). A helical transmembrane segment spans residues 197–217 (SFLGLGMTTYTAWYLTIASIV). Residues 218-232 (HGQAENVTHTGPKKL) lie on the Extracellular side of the membrane. Residue Asn-223 is glycosylated (N-linked (GlcNAc...) asparagine). A helical membrane pass occupies residues 233-253 (VLYFTGATNILYTFGGHAVTV). Residues 254–266 (EIMHAMWKPQKFK) are Cytoplasmic-facing. A helical membrane pass occupies residues 267 to 287 (YIYLMATLYVFTLTIPSATAV). At 288 to 314 (YWAFGDELLNHSNAFSLLPKNGWRDGA) the chain is on the extracellular side. The N-linked (GlcNAc...) asparagine glycan is linked to Asn-297. The chain crosses the membrane as a helical span at residues 315–335 (VILMLIHQFITFGFACTPLYF). Residues 336-356 (VWEKVIGMHDTRSICLRALAR) are Cytoplasmic-facing. A helical membrane pass occupies residues 357 to 377 (LPVVIPIWFLAIIFPFFGPIN). Ser-378 is a topological domain (extracellular). The chain crosses the membrane as a helical span at residues 379-399 (AVGALLVSFTVYIIPSAAHML). The Cytoplasmic portion of the chain corresponds to 400 to 425 (TYRKASARKNAAEKPPFFMPSWTAMY). Residues 426 to 446 (IFNAFIVIWVLVVGFGFGGWA) traverse the membrane as a helical segment. Topologically, residues 447 to 484 (SMTNFIRQIDTFGLFAKCYQCKPPPVMAAAPPPHALHH) are extracellular.

Belongs to the amino acid/polyamine transporter 2 family. Amino acid/auxin permease (AAAP) (TC 2.A.18.1) subfamily. As to expression, shoots and roots of nodulating plants. Higher levels in roots, flowers and stems, lower in nodules, leaves, petioles and shoot apices.

It localises to the cell membrane. Its function is as follows. Carrier protein involved in proton-driven auxin influx. Mediates the formation of auxin gradient from developing leaves (site of auxin biosynthesis) to tips by contributing to the loading of auxin in vascular tissues and facilitating acropetal (base to tip) auxin transport within inner tissues of the root apex, and basipetal (tip to base) auxin transport within outer tissues of the root apex. May be involved in lateral roots and nodules formation. This is Auxin transporter-like protein 2 (LAX2) from Medicago truncatula (Barrel medic).